Consider the following 531-residue polypeptide: Membrane protein insertase YidC (531 aa).

Transmembrane regions (helical) follow at residues 5-25 (ALIA…LFSP), 343-363 (GNYG…FYPL), 415-435 (LPML…MFSI), and 489-509 (PVVF…YWLV).

It belongs to the OXA1/ALB3/YidC family. Type 1 subfamily. As to quaternary structure, interacts with the Sec translocase complex via SecD. Specifically interacts with transmembrane segments of nascent integral membrane proteins during membrane integration.

The protein resides in the cell inner membrane. Its function is as follows. Required for the insertion and/or proper folding and/or complex formation of integral membrane proteins into the membrane. Involved in integration of membrane proteins that insert both dependently and independently of the Sec translocase complex, as well as at least some lipoproteins. Aids folding of multispanning membrane proteins. This chain is Membrane protein insertase YidC, found in Geobacter sulfurreducens (strain ATCC 51573 / DSM 12127 / PCA).